The primary structure comprises 84 residues: Conotoxin Tx8.1 (84 aa).

Residues 1 to 19 (LKMGAMFVLLLLFTLASSH) form the signal peptide. A propeptide spanning residues 20–44 (REGDIQARKTHLKSDFYRTLPRFAR) is cleaved from the precursor.

It belongs to the conotoxin S superfamily. Contains 5 disulfide bonds. In terms of tissue distribution, expressed by the venom duct.

Its subcellular location is the secreted. This Conus textile (Cloth-of-gold cone) protein is Conotoxin Tx8.1.